The sequence spans 499 residues: Glutelin type-A 1 (499 aa).

A signal peptide spans 1–24 (MASINRPIVFFTVCLFLLCNGSLA). Disulfide bonds link C46–C79 and C122–C313. Cupin type-1 domains lie at 51 to 248 (LQAF…QVAR) and 319 to 468 (QNID…EEAQ).

Belongs to the 11S seed storage protein (globulins) family. Hexamer; each subunit is composed of an acidic and a basic chain derived from a single precursor and linked by a disulfide bond.

Its function is as follows. Seed storage protein. The protein is Glutelin type-A 1 (GLUA1) of Oryza sativa subsp. japonica (Rice).